A 147-amino-acid chain; its full sequence is Hemoglobin subunit beta-Y (147 aa).

The region spanning His-3–His-147 is the Globin domain. Residues His-64 and His-93 each coordinate heme b.

This sequence belongs to the globin family. Heterotetramer of two alpha chains and two beta chains.

Its function is as follows. This is a minor early embryonic beta chain. The protein is Hemoglobin subunit beta-Y (HBBY) of Mesocricetus auratus (Golden hamster).